We begin with the raw amino-acid sequence, 172 residues long: Translocator protein 2 (172 aa).

The next 5 membrane-spanning stretches (helical) occupy residues 3–23 (PQGA…SLLT), 45–65 (VLLA…YLVW), 80–100 (LGLY…FFAA), 104–124 (GLAL…ALIW), and 130–150 (LAAV…SIAY).

The protein belongs to the TspO/BZRP family. In terms of assembly, homotetramer. May also form homodimer. As to expression, expressed in erythrocytes (at protein level).

It is found in the endoplasmic reticulum membrane. The protein localises to the cell membrane. In terms of biological role, cholesterol-binding protein involved in the redistribution of cholesterol from lipid droplets to the endoplasmic reticulum. Required to meet cholesterol demands during erythropoietic differentiation. May play a role in transport processes at the plasma membrane of erythrocytes, including regulating VDAC-mediated ATP export, and import of the heme precursors protoporphyrin IX and 5-aminolevulinic acid. This Canis lupus familiaris (Dog) protein is Translocator protein 2.